We begin with the raw amino-acid sequence, 362 residues long: Phosphoserine aminotransferase (362 aa).

The L-glutamate site is built by Ser-9 and Arg-42. Residues 76–77 (GR), Trp-102, Thr-153, Asp-174, and Gln-197 each bind pyridoxal 5'-phosphate. Position 198 is an N6-(pyridoxal phosphate)lysine (Lys-198). 239 to 240 (NT) provides a ligand contact to pyridoxal 5'-phosphate.

It belongs to the class-V pyridoxal-phosphate-dependent aminotransferase family. SerC subfamily. As to quaternary structure, homodimer. Pyridoxal 5'-phosphate is required as a cofactor.

It is found in the cytoplasm. The enzyme catalyses O-phospho-L-serine + 2-oxoglutarate = 3-phosphooxypyruvate + L-glutamate. It carries out the reaction 4-(phosphooxy)-L-threonine + 2-oxoglutarate = (R)-3-hydroxy-2-oxo-4-phosphooxybutanoate + L-glutamate. The protein operates within amino-acid biosynthesis; L-serine biosynthesis; L-serine from 3-phospho-D-glycerate: step 2/3. It functions in the pathway cofactor biosynthesis; pyridoxine 5'-phosphate biosynthesis; pyridoxine 5'-phosphate from D-erythrose 4-phosphate: step 3/5. Catalyzes the reversible conversion of 3-phosphohydroxypyruvate to phosphoserine and of 3-hydroxy-2-oxo-4-phosphonooxybutanoate to phosphohydroxythreonine. This Escherichia coli O6:K15:H31 (strain 536 / UPEC) protein is Phosphoserine aminotransferase.